Reading from the N-terminus, the 61-residue chain is Small ribosomal subunit protein uS14 (61 aa).

The Zn(2+) site is built by C24, C27, C40, and C43.

This sequence belongs to the universal ribosomal protein uS14 family. Zinc-binding uS14 subfamily. As to quaternary structure, part of the 30S ribosomal subunit. Contacts proteins S3 and S10. It depends on Zn(2+) as a cofactor.

Functionally, binds 16S rRNA, required for the assembly of 30S particles and may also be responsible for determining the conformation of the 16S rRNA at the A site. The sequence is that of Small ribosomal subunit protein uS14 from Rubrobacter xylanophilus (strain DSM 9941 / JCM 11954 / NBRC 16129 / PRD-1).